The following is a 729-amino-acid chain: Monosaccharide-sensing protein 3 (729 aa).

The next 6 helical transmembrane spans lie at 5–25 (VLVA…NATI), 46–66 (GLIV…SGPV), 81–101 (VLYF…VLLF), 104–124 (LLDG…ISET), 135–155 (TFPQ…VFGM), and 165–185 (LMLG…AFFL). A disordered region spans residues 337-372 (QESQWDPERNNEDSSDQDENLNSPLLSPQTTEPDDY). Over residues 356–367 (NLNSPLLSPQTT) the composition is skewed to polar residues. Phosphoserine is present on Ser-446. 6 consecutive transmembrane segments (helical) span residues 511-531 (ALMV…NGVM), 557-577 (ASLL…LVSM), 581-601 (MLST…GSLV), 610-630 (LIST…FGAI), 650-670 (ICAL…PVML), and 673-693 (IGIA…WVFV).

Belongs to the major facilitator superfamily. Sugar transporter (TC 2.A.1.1) family. As to expression, weakly expressed.

The protein localises to the vacuole membrane. It carries out the reaction D-glucose(out) + H(+)(in) = D-glucose(in) + H(+)(out). It catalyses the reaction sucrose(out) + H(+)(in) = sucrose(in) + H(+)(out). In terms of biological role, sugar proton-coupled antiporter which contributes to vacuolar sugar import (e.g. monosaccharides including glucose,sucrose and fructose), particularly during stress responses (e.g. in response to cold). In Arabidopsis thaliana (Mouse-ear cress), this protein is Monosaccharide-sensing protein 3.